The following is a 90-amino-acid chain: Small ribosomal subunit protein bS16 (90 aa).

This sequence belongs to the bacterial ribosomal protein bS16 family.

This is Small ribosomal subunit protein bS16 from Listeria innocua serovar 6a (strain ATCC BAA-680 / CLIP 11262).